We begin with the raw amino-acid sequence, 196 residues long: Probable GTP-binding protein EngB (196 aa).

The region spanning 22 to 196 (NLPEIALSGR…GNWIEEKISK (175 aa)) is the EngB-type G domain. GTP-binding positions include 30–37 (GRSNVGKS), 57–61 (GKTQT), 75–78 (DVPG), 142–145 (TKID), and 175–177 (FSS). Residues S37 and T59 each coordinate Mg(2+).

The protein belongs to the TRAFAC class TrmE-Era-EngA-EngB-Septin-like GTPase superfamily. EngB GTPase family. The cofactor is Mg(2+).

Its function is as follows. Necessary for normal cell division and for the maintenance of normal septation. The chain is Probable GTP-binding protein EngB from Lactobacillus helveticus (strain DPC 4571).